We begin with the raw amino-acid sequence, 733 residues long: Phosphoribosylformylglycinamidine synthase subunit PurL (733 aa).

Residue histidine 41 is part of the active site. Residues tyrosine 44 and lysine 83 each contribute to the ATP site. Mg(2+) is bound at residue glutamate 85. Residues 86 to 89 (SHNH) and arginine 108 each bind substrate. Histidine 87 (proton acceptor) is an active-site residue. Aspartate 109 lines the Mg(2+) pocket. The segment at 212 to 232 (GASFASQELSEESEEKRPSVQ) is disordered. Position 232 (glutamine 232) interacts with substrate. Position 260 (aspartate 260) interacts with Mg(2+). 304–306 (ESQ) contributes to the substrate binding site. Aspartate 488 and glycine 525 together coordinate ATP. Asparagine 526 serves as a coordination point for Mg(2+). Position 528 (serine 528) interacts with substrate.

The protein belongs to the FGAMS family. As to quaternary structure, monomer. Part of the FGAM synthase complex composed of 1 PurL, 1 PurQ and 2 PurS subunits.

Its subcellular location is the cytoplasm. The catalysed reaction is N(2)-formyl-N(1)-(5-phospho-beta-D-ribosyl)glycinamide + L-glutamine + ATP + H2O = 2-formamido-N(1)-(5-O-phospho-beta-D-ribosyl)acetamidine + L-glutamate + ADP + phosphate + H(+). It functions in the pathway purine metabolism; IMP biosynthesis via de novo pathway; 5-amino-1-(5-phospho-D-ribosyl)imidazole from N(2)-formyl-N(1)-(5-phospho-D-ribosyl)glycinamide: step 1/2. Functionally, part of the phosphoribosylformylglycinamidine synthase complex involved in the purines biosynthetic pathway. Catalyzes the ATP-dependent conversion of formylglycinamide ribonucleotide (FGAR) and glutamine to yield formylglycinamidine ribonucleotide (FGAM) and glutamate. The FGAM synthase complex is composed of three subunits. PurQ produces an ammonia molecule by converting glutamine to glutamate. PurL transfers the ammonia molecule to FGAR to form FGAM in an ATP-dependent manner. PurS interacts with PurQ and PurL and is thought to assist in the transfer of the ammonia molecule from PurQ to PurL. The sequence is that of Phosphoribosylformylglycinamidine synthase subunit PurL from Thermoanaerobacter pseudethanolicus (strain ATCC 33223 / 39E) (Clostridium thermohydrosulfuricum).